We begin with the raw amino-acid sequence, 264 residues long: tRNA pseudouridine synthase A (264 aa).

Catalysis depends on D51, which acts as the Nucleophile. A substrate-binding site is contributed by Y109.

It belongs to the tRNA pseudouridine synthase TruA family. As to quaternary structure, homodimer.

The enzyme catalyses uridine(38/39/40) in tRNA = pseudouridine(38/39/40) in tRNA. Formation of pseudouridine at positions 38, 39 and 40 in the anticodon stem and loop of transfer RNAs. This chain is tRNA pseudouridine synthase A, found in Vibrio cholerae serotype O1 (strain ATCC 39541 / Classical Ogawa 395 / O395).